Reading from the N-terminus, the 43-residue chain is Bacteriocin weissellin-A (43 aa).

Residues cysteine 9 and cysteine 14 are joined by a disulfide bond.

It localises to the secreted. In terms of biological role, highly active against Gram-positive bacteria M.flavus strain ATCC 400, M.luteus strain CECT241, C.soprogenes strain NCTC533, L.monocytogenes strain ATCC 19111, L.inocua strain ATCC BAA-680D and S.carnosus strain LMG13564. Less active against B.cereus strain LMG13569, C.thiaminolyticum strain ATCC 15579, E.faecalis strain NCTC8176, L.lactis strain LM0230, L.casei strain ATCC 344, L.lactis strain IL1403, L.jensenii strain ATCC 25258, L.plantarum strain CECT220, L.brevis strain ATCC 8287, L.bulgaricus strain LMG13551, P.acidilactici strain ATCC 25740, P.pentosaceus strain ATCC 33316 and P.pentosaceus strain LMG13560. Weakly active against L.mesenteroides strain ATCC 19254, L.lactis strain ATCC 1454, L.sakei strain CECT906T, L.lactis subsp. cremoris strain MC1363 and L.curvatus strain ATCC 51436. Not active against Gram-negative bacterium S.enteritidis strain ATCC 13076. The mode of action appears to be non-lytic. Inactivated by proteinase K, but insensitive to trypsin, alpha-chymotrypsin, pepsin and papain. This chain is Bacteriocin weissellin-A, found in Weissella paramesenteroides (Leuconostoc paramesenteroides).